We begin with the raw amino-acid sequence, 206 residues long: Two-component response regulator ORR7 (206 aa).

Positions valine 53 to tyrosine 92 are disordered. A compositionally biased stretch (acidic residues) spans serine 61 to alanine 88. Residues tyrosine 92–leucine 205 enclose the Response regulatory domain. Residue aspartate 138 is modified to 4-aspartylphosphate.

It belongs to the ARR family. Type-A subfamily. Two-component system major event consists of a His-to-Asp phosphorelay between a sensor histidine kinase (HK) and a response regulator (RR). In plants, the His-to-Asp phosphorelay involves an additional intermediate named Histidine-containing phosphotransfer protein (HPt). This multistep phosphorelay consists of a His-Asp-His-Asp sequential transfer of a phosphate group between first a His and an Asp of the HK protein, followed by the transfer to a conserved His of the HPt protein and finally the transfer to an Asp in the receiver domain of the RR protein. In terms of tissue distribution, expressed in flowers, and at low levels in roots, mature leaves and shoots.

Its function is as follows. Functions as a response regulator involved in His-to-Asp phosphorelay signal transduction system. Phosphorylation of the Asp residue in the receiver domain activates the ability of the protein to promote the transcription of target genes. Type-A response regulators seem to act as negative regulators of the cytokinin signaling. In Oryza sativa subsp. indica (Rice), this protein is Two-component response regulator ORR7.